The following is a 331-amino-acid chain: Tetraacyldisaccharide 4'-kinase (331 aa).

57-64 contacts ATP; that stretch reads SVGGNGKT.

The protein belongs to the LpxK family.

The enzyme catalyses a lipid A disaccharide + ATP = a lipid IVA + ADP + H(+). It functions in the pathway glycolipid biosynthesis; lipid IV(A) biosynthesis; lipid IV(A) from (3R)-3-hydroxytetradecanoyl-[acyl-carrier-protein] and UDP-N-acetyl-alpha-D-glucosamine: step 6/6. Transfers the gamma-phosphate of ATP to the 4'-position of a tetraacyldisaccharide 1-phosphate intermediate (termed DS-1-P) to form tetraacyldisaccharide 1,4'-bis-phosphate (lipid IVA). The polypeptide is Tetraacyldisaccharide 4'-kinase (Histophilus somni (strain 2336) (Haemophilus somnus)).